We begin with the raw amino-acid sequence, 27 residues long: GFLGPLLKLAAKGVAKVIPHLIPSRQQ.

Expressed by the skin glands.

It is found in the secreted. In terms of biological role, has very weak antimicrobial activity against Gram-positive bacterium S.aureus and Gram-negative bacterium E.coli and stronger activity against yeast C.albicans. Enhances the antibacterial activity of XT3. Has hemolytic activity against human red blood cells. The polypeptide is Antimicrobial peptide 1 (Xenopus tropicalis (Western clawed frog)).